A 339-amino-acid chain; its full sequence is Protein RecA (339 aa).

74-81 (GPESSGKT) contributes to the ATP binding site.

This sequence belongs to the RecA family.

It is found in the cytoplasm. Its function is as follows. Can catalyze the hydrolysis of ATP in the presence of single-stranded DNA, the ATP-dependent uptake of single-stranded DNA by duplex DNA, and the ATP-dependent hybridization of homologous single-stranded DNAs. It interacts with LexA causing its activation and leading to its autocatalytic cleavage. The polypeptide is Protein RecA (Phytoplasma mali (strain AT)).